The following is a 202-amino-acid chain: Holliday junction branch migration complex subunit RuvA (202 aa).

The domain I stretch occupies residues 1 to 65 (MIAYVEGRVA…EDALELFGFS (65 aa)). A domain II region spans residues 66-144 (TWDERQTFMV…VEDLPAGLVL (79 aa)). A flexible linker region spans residues 145 to 155 (AGGAAPGGVFR). Residues 155–202 (RDALAGLGNLGYLEDEAAPVLKEVLKAEPDLDVAGALRAALKALARGR) form a domain III region.

Belongs to the RuvA family. In terms of assembly, homotetramer. Forms an RuvA(8)-RuvB(12)-Holliday junction (HJ) complex. HJ DNA is sandwiched between 2 RuvA tetramers; dsDNA enters through RuvA and exits via RuvB. An RuvB hexamer assembles on each DNA strand where it exits the tetramer. Each RuvB hexamer is contacted by two RuvA subunits (via domain III) on 2 adjacent RuvB subunits; this complex drives branch migration. In the full resolvosome a probable DNA-RuvA(4)-RuvB(12)-RuvC(2) complex forms which resolves the HJ.

The protein localises to the cytoplasm. Functionally, the RuvA-RuvB-RuvC complex processes Holliday junction (HJ) DNA during genetic recombination and DNA repair, while the RuvA-RuvB complex plays an important role in the rescue of blocked DNA replication forks via replication fork reversal (RFR). RuvA specifically binds to HJ cruciform DNA, conferring on it an open structure. The RuvB hexamer acts as an ATP-dependent pump, pulling dsDNA into and through the RuvAB complex. HJ branch migration allows RuvC to scan DNA until it finds its consensus sequence, where it cleaves and resolves the cruciform DNA. The protein is Holliday junction branch migration complex subunit RuvA of Nitratidesulfovibrio vulgaris (strain DSM 19637 / Miyazaki F) (Desulfovibrio vulgaris).